The primary structure comprises 482 residues: Anthocyanin 3'-O-beta-glucosyltransferase (482 aa).

Catalysis depends on His-16, which acts as the Proton acceptor. His-16 is an an anthocyanidin binding site. Asp-119 (charge relay) is an active-site residue. UDP-alpha-D-glucose contacts are provided by Ala-349, Gln-351, His-366, Trp-369, Asn-370, Ser-371, and Glu-374. Ala-389 serves as a coordination point for an anthocyanidin. Glu-390 and Gln-391 together coordinate UDP-alpha-D-glucose.

Belongs to the UDP-glycosyltransferase family. In terms of processing, the N-terminus is blocked. Abundant in petals and barely detected in leaves.

The catalysed reaction is delphinidin 3,5-bis-O-beta-D-glucoside + UDP-alpha-D-glucose = delphinidin 3,3',5-tri-O-beta-D-glucoside + UDP + H(+). Specifically glucosylates the 3'-hydroxy group of delphinidin 3,5-di-O-glucoside to produce gentiodelphin. Shows a strict specificity for UDP-glucose as donor. The chain is Anthocyanin 3'-O-beta-glucosyltransferase from Gentiana triflora (Clustered gentian).